A 108-amino-acid polypeptide reads, in one-letter code: Integration host factor subunit alpha (108 aa).

This sequence belongs to the bacterial histone-like protein family. As to quaternary structure, heterodimer of an alpha and a beta chain.

Functionally, this protein is one of the two subunits of integration host factor, a specific DNA-binding protein that functions in genetic recombination as well as in transcriptional and translational control. In Rhodopseudomonas palustris (strain BisB18), this protein is Integration host factor subunit alpha.